The chain runs to 635 residues: Extracellular metalloproteinase 9 (635 aa).

The first 19 residues, 1–19 (MHGLLLAAGLLTLPLRALA), serve as a signal peptide directing secretion. A propeptide spanning residues 20-246 (HPGHQSTSIL…IHGVTDYVAD (227 aa)) is cleaved from the precursor. An N-linked (GlcNAc...) asparagine glycan is attached at asparagine 274. Residues 279–307 (TWHSDGNTRYPTTRGNNGIAQDNPSGGTG) are disordered. N-linked (GlcNAc...) asparagine glycosylation occurs at asparagine 413. Histidine 430 is a Zn(2+) binding site. Residue glutamate 431 is part of the active site. Position 434 (histidine 434) interacts with Zn(2+). N-linked (GlcNAc...) asparagine glycosylation occurs at asparagine 475.

Belongs to the peptidase M36 family. The cofactor is Zn(2+).

It localises to the secreted. Secreted metalloproteinase that allows assimilation of proteinaceous substrates. This Uncinocarpus reesii (strain UAMH 1704) protein is Extracellular metalloproteinase 9 (MEP9).